The primary structure comprises 853 residues: Trimethylguanosine synthase (853 aa).

The disordered stretch occupies residues 54–84; it reads NNAGDQGTEEEEDGHSNGTAESHSPNESDLD. Threonine 61 is subject to Phosphothreonine. A compositionally biased stretch (polar residues) spans 69-80; that stretch reads SNGTAESHSPNE. A phosphoserine mark is found at serine 81, serine 85, serine 92, and serine 139. Tyrosine 144 is modified (phosphotyrosine). A Phosphoserine modification is found at serine 152. 2 disordered regions span residues 328-437 and 523-549; these read VEQS…DDNG and ETSQDSLSQNKMQDTCTSSDSEEQDMS. Residues 365–383 are compositionally biased toward basic and acidic residues; the sequence is KENDISENRSSDQPAKELQ. 2 positions are modified to phosphoserine: serine 405 and serine 431. Over residues 424–435 the composition is skewed to acidic residues; the sequence is DVDENPDSEVDD. Over residues 526-541 the composition is skewed to polar residues; that stretch reads QDSLSQNKMQDTCTSS. Serine 572 is modified (phosphoserine). A disordered region spans residues 594–623; sequence CSTEEIPNSPHAETEVEIKKKKKKNKNKKI. A compositionally biased stretch (basic residues) spans 612–621; it reads KKKKKKNKNK. Aspartate 711 lines the S-adenosyl-L-methionine pocket.

It belongs to the methyltransferase superfamily. Trimethylguanosine synthase family. May form homooligomers. Interacts with CREBBP/CBP, EED/WAIT1, EP300/P300, NCOA6/PRIP, PPARBP/PBP and SMN. Ubiquitously expressed.

It localises to the cytoplasm. Its subcellular location is the nucleus. The protein resides in the cajal body. The protein localises to the nucleolus. The catalysed reaction is a 5'-end (N(7)-methyl 5'-triphosphoguanosine)-ribonucleoside in snRNA + S-adenosyl-L-methionine = a 5'-end (N(2),N(7)-dimethyl 5'-triphosphoguanosine)-ribonucleoside in snRNA + S-adenosyl-L-homocysteine + H(+). The enzyme catalyses a 5'-end (N(7)-methyl 5'-triphosphoguanosine)-ribonucleoside in snoRNA + S-adenosyl-L-methionine = a 5'-end (N(2),N(7)-dimethyl 5'-triphosphoguanosine)-ribonucleoside in snoRNA + S-adenosyl-L-homocysteine + H(+). It carries out the reaction a 5'-end (N(2),N(7)-dimethyl 5'-triphosphoguanosine)-ribonucleoside in snRNA + S-adenosyl-L-methionine = a 5'-end (N(2),N(2),N(7)-trimethyl 5'-triphosphoguanosine)-ribonucleoside in snRNA + S-adenosyl-L-homocysteine + H(+). It catalyses the reaction a 5'-end (N(2),N(7)-dimethyl 5'-triphosphoguanosine)-ribonucleoside in snoRNA + S-adenosyl-L-methionine = a 5'-end (N(2),N(2),N(7)-trimethyl 5'-triphosphoguanosine)-ribonucleoside in snoRNA + S-adenosyl-L-homocysteine + H(+). Functionally, catalyzes the 2 serial methylation steps for the conversion of the 7-monomethylguanosine (m(7)G) caps of snRNAs and snoRNAs to a 2,2,7-trimethylguanosine (m(2,2,7)G) cap structure. The enzyme is specific for guanine, and N7 methylation must precede N2 methylation. Hypermethylation of the m7G cap of U snRNAs leads to their concentration in nuclear foci, their colocalization with coilin and the formation of canonical Cajal bodies (CBs). Plays a role in transcriptional regulation. The chain is Trimethylguanosine synthase (Tgs1) from Mus musculus (Mouse).